Reading from the N-terminus, the 246-residue chain is Chalcone--flavanone isomerase 1 (246 aa).

Positions 59, 124, and 201 each coordinate substrate.

This sequence belongs to the chalcone isomerase family. In terms of tissue distribution, mostly expressed in siliques and flowers, and, to a lower extent, in leaves.

It carries out the reaction a chalcone = a flavanone.. It functions in the pathway secondary metabolite biosynthesis; flavonoid biosynthesis. In terms of biological role, catalyzes the intramolecular cyclization of bicyclic chalcones into tricyclic (S)-flavanones. Responsible for the isomerization of 4,2',4',6'-tetrahydroxychalcone (also termed chalcone) into naringenin. The chain is Chalcone--flavanone isomerase 1 (CHI1) from Arabidopsis thaliana (Mouse-ear cress).